A 65-amino-acid chain; its full sequence is Large ribosomal subunit protein bL35 (65 aa).

It belongs to the bacterial ribosomal protein bL35 family.

The polypeptide is Large ribosomal subunit protein bL35 (Rubrobacter xylanophilus (strain DSM 9941 / JCM 11954 / NBRC 16129 / PRD-1)).